The following is a 174-amino-acid chain: Translation initiation factor IF-3 (174 aa).

Belongs to the IF-3 family. Monomer.

The protein resides in the cytoplasm. IF-3 binds to the 30S ribosomal subunit and shifts the equilibrium between 70S ribosomes and their 50S and 30S subunits in favor of the free subunits, thus enhancing the availability of 30S subunits on which protein synthesis initiation begins. The polypeptide is Translation initiation factor IF-3 (Azorhizobium caulinodans (strain ATCC 43989 / DSM 5975 / JCM 20966 / LMG 6465 / NBRC 14845 / NCIMB 13405 / ORS 571)).